The chain runs to 458 residues: Tyrosine phenol-lyase (458 aa).

The residue at position 258 (K258) is an N6-(pyridoxal phosphate)lysine.

This sequence belongs to the beta-eliminating lyase family. In terms of assembly, homotetramer. The cofactor is pyridoxal 5'-phosphate.

It catalyses the reaction L-tyrosine + H2O = phenol + pyruvate + NH4(+). This Pasteurella multocida (strain Pm70) protein is Tyrosine phenol-lyase (tpl).